We begin with the raw amino-acid sequence, 960 residues long: Glycine dehydrogenase (decarboxylating) (960 aa).

Lysine 709 is modified (N6-(pyridoxal phosphate)lysine).

Belongs to the GcvP family. The glycine cleavage system is composed of four proteins: P, T, L and H. The cofactor is pyridoxal 5'-phosphate.

It catalyses the reaction N(6)-[(R)-lipoyl]-L-lysyl-[glycine-cleavage complex H protein] + glycine + H(+) = N(6)-[(R)-S(8)-aminomethyldihydrolipoyl]-L-lysyl-[glycine-cleavage complex H protein] + CO2. The glycine cleavage system catalyzes the degradation of glycine. The P protein binds the alpha-amino group of glycine through its pyridoxal phosphate cofactor; CO(2) is released and the remaining methylamine moiety is then transferred to the lipoamide cofactor of the H protein. This Hahella chejuensis (strain KCTC 2396) protein is Glycine dehydrogenase (decarboxylating).